The chain runs to 419 residues: Dynein regulatory complex protein 9 (419 aa).

Disordered regions lie at residues methionine 1–valine 47 and serine 393–lysine 419. Residues glutamate 34 to serine 44 show a composition bias toward acidic residues. Residues glutamate 371–glutamate 400 form the IQ domain.

The protein belongs to the DRC9 family. In terms of assembly, component of the nexin-dynein regulatory complex (N-DRC). Interacts (via IQ domain) with CALM when calcium levels are low. Does not interact with CALM in the presence of Ca(2+). Interacts with the HSP70 proteins HSPA1L and HSPA8. May form a complex with CAMK4 and HSP70.

It is found in the cytoplasm. Its subcellular location is the cell projection. The protein resides in the cilium. It localises to the flagellum. The protein localises to the cytoskeleton. It is found in the flagellum axoneme. Functionally, component of the nexin-dynein regulatory complex (N-DRC), a key regulator of ciliary/flagellar motility which maintains the alignment and integrity of the distal axoneme and regulates microtubule sliding in motile axonemes. Binds calmodulin when cellular Ca(2+) levels are low and thereby contributes to the regulation of calcium and calmodulin-dependent protein kinase IV (CAMK4) activity; contributes to the regulation of CAMK4 signaling cascades. Required for normal axoneme assembly in sperm flagella, normal sperm tail formation and for male fertility. In Rattus norvegicus (Rat), this protein is Dynein regulatory complex protein 9 (Iqcg).